A 251-amino-acid polypeptide reads, in one-letter code: MPKDASGPPRSLLVLGGTSAIGLATARRLIARGARLVHLAARPSPALEKAAGELTALGAEVRTVPFDALDPESHQASLGPVFAAGDVDLVLLRFGIAGDQARDESRPLDAVRVAQTNYTGAVGAGLLCGAALQEQGHGTLVVLSSAAGVRARRADFIYGSSKAGLDAFAQGLGDALYGTGVRVMVVRPGTVLDPGTPRGDARLTTTPGQVAAAIELGLRRGSETVWVPGGLRLVMSAVRGLPRPLFRRLVV.

14–37 (VLGGTSAIGLATARRLIARGARLV) provides a ligand contact to NADP(+). Ser-145 is a substrate binding site. Residue Tyr-158 is the Proton acceptor of the active site.

The protein belongs to the short-chain dehydrogenases/reductases (SDR) family.

Its function is as follows. May be involved in the biosynthesis of a heptaene-type antibiotic. This is an uncharacterized protein from Streptomyces coelicolor.